A 473-amino-acid chain; its full sequence is Photosystem II CP43 reaction center protein (473 aa).

Residues 1-14 (MKNLYSLRRFYHVE) constitute a propeptide that is removed on maturation. Residue Thr-15 is modified to N-acetylthreonine. The residue at position 15 (Thr-15) is a Phosphothreonine. 5 helical membrane-spanning segments follow: residues 69–93 (LFEV…PHLA), 134–155 (LVGP…KDKN), 178–200 (KAMY…RIIS), 255–275 (KPWA…LSYS), and 291–312 (WFNT…ASQS). Position 367 (Glu-367) interacts with [CaMn4O5] cluster. A helical membrane pass occupies residues 447–471 (RARAAAAGFEKGIDRDNEPVLSMRP).

It belongs to the PsbB/PsbC family. PsbC subfamily. PSII is composed of 1 copy each of membrane proteins PsbA, PsbB, PsbC, PsbD, PsbE, PsbF, PsbH, PsbI, PsbJ, PsbK, PsbL, PsbM, PsbT, PsbX, PsbY, PsbZ, Psb30/Ycf12, at least 3 peripheral proteins of the oxygen-evolving complex and a large number of cofactors. It forms dimeric complexes. It depends on Binds multiple chlorophylls and provides some of the ligands for the Ca-4Mn-5O cluster of the oxygen-evolving complex. It may also provide a ligand for a Cl- that is required for oxygen evolution. PSII binds additional chlorophylls, carotenoids and specific lipids. as a cofactor.

Its subcellular location is the plastid. The protein resides in the chloroplast thylakoid membrane. Functionally, one of the components of the core complex of photosystem II (PSII). It binds chlorophyll and helps catalyze the primary light-induced photochemical processes of PSII. PSII is a light-driven water:plastoquinone oxidoreductase, using light energy to abstract electrons from H(2)O, generating O(2) and a proton gradient subsequently used for ATP formation. This is Photosystem II CP43 reaction center protein from Chlorella vulgaris (Green alga).